We begin with the raw amino-acid sequence, 394 residues long: NAD(P)H-quinone oxidoreductase subunit H (394 aa).

Belongs to the complex I 49 kDa subunit family. In terms of assembly, NDH-1 can be composed of about 15 different subunits; different subcomplexes with different compositions have been identified which probably have different functions.

Its subcellular location is the cellular thylakoid membrane. It catalyses the reaction a plastoquinone + NADH + (n+1) H(+)(in) = a plastoquinol + NAD(+) + n H(+)(out). The catalysed reaction is a plastoquinone + NADPH + (n+1) H(+)(in) = a plastoquinol + NADP(+) + n H(+)(out). Functionally, NDH-1 shuttles electrons from an unknown electron donor, via FMN and iron-sulfur (Fe-S) centers, to quinones in the respiratory and/or the photosynthetic chain. The immediate electron acceptor for the enzyme in this species is believed to be plastoquinone. Couples the redox reaction to proton translocation, and thus conserves the redox energy in a proton gradient. Cyanobacterial NDH-1 also plays a role in inorganic carbon-concentration. The polypeptide is NAD(P)H-quinone oxidoreductase subunit H (Acaryochloris marina (strain MBIC 11017)).